Here is a 205-residue protein sequence, read N- to C-terminus: Small ribosomal subunit protein uS4 (205 aa).

Residues 1–12 (MSKRVQAKHKLD) show a composition bias toward basic residues. Residues 1–49 (MSKRVQAKHKLDRRMGQNIWGRPKSPVNRREYGPGQHGQRRKGKMSDFG) are disordered. An S4 RNA-binding domain is found at 94–155 (RRLDAVVYRS…ASRQLEIVVV (62 aa)).

The protein belongs to the universal ribosomal protein uS4 family. As to quaternary structure, part of the 30S ribosomal subunit. Contacts protein S5. The interaction surface between S4 and S5 is involved in control of translational fidelity.

One of the primary rRNA binding proteins, it binds directly to 16S rRNA where it nucleates assembly of the body of the 30S subunit. Its function is as follows. With S5 and S12 plays an important role in translational accuracy. This is Small ribosomal subunit protein uS4 from Methylorubrum populi (strain ATCC BAA-705 / NCIMB 13946 / BJ001) (Methylobacterium populi).